The chain runs to 317 residues: Glycerol-3-phosphate dehydrogenase [NAD(P)+] (317 aa).

The NADPH site is built by tryptophan 20, arginine 40, arginine 41, and lysine 88. 2 residues coordinate sn-glycerol 3-phosphate: lysine 88 and glycine 116. Serine 120 is an NADPH binding site. Sn-glycerol 3-phosphate-binding residues include lysine 171, aspartate 224, serine 234, arginine 235, and asparagine 236. Lysine 171 (proton acceptor) is an active-site residue. An NADPH-binding site is contributed by arginine 235. NADPH is bound at residue glutamate 261.

Belongs to the NAD-dependent glycerol-3-phosphate dehydrogenase family.

Its subcellular location is the cytoplasm. The enzyme catalyses sn-glycerol 3-phosphate + NAD(+) = dihydroxyacetone phosphate + NADH + H(+). It carries out the reaction sn-glycerol 3-phosphate + NADP(+) = dihydroxyacetone phosphate + NADPH + H(+). Its pathway is membrane lipid metabolism; glycerophospholipid metabolism. Functionally, catalyzes the reduction of the glycolytic intermediate dihydroxyacetone phosphate (DHAP) to sn-glycerol 3-phosphate (G3P), the key precursor for phospholipid synthesis. This is Glycerol-3-phosphate dehydrogenase [NAD(P)+] from Synechocystis sp. (strain ATCC 27184 / PCC 6803 / Kazusa).